A 166-amino-acid polypeptide reads, in one-letter code: Early E3 18.5 kDa glycoprotein (166 aa).

Residues 1-19 form the signal peptide; the sequence is MGPILVLLVLLSLLEPGSA. Residues 20-131 are Lumenal-facing; the sequence is NYDPCLDFDP…SKDNIVTFSI (112 aa). Asn31 is a glycosylation site (N-linked (GlcNAc...) asparagine; by host). Intrachain disulfides connect Cys32–Cys50 and Cys44–Cys106. Asn63, Asn67, and Asn97 each carry an N-linked (GlcNAc...) asparagine; by host glycan. A helical transmembrane segment spans residues 132 to 152; that stretch reads AYCLCACLLTALLCVCIHLLV. Over 153 to 166 the chain is Cytoplasmic; that stretch reads TTRIKNANNKEKMP. The Di-lysine motif motif lies at 162–166; that stretch reads KEKMP.

This sequence belongs to the adenoviridae E19 family. Post-translationally, both disulfide bonds are absolutely critical for the interaction with MHC antigens. N-glycosylated; high-mannose.

It localises to the host endoplasmic reticulum membrane. Binds and retains class I heavy chains in the endoplasmic reticulum during the early period of virus infection, thereby impairing their transport to the cell surface. Also delays the expression of class I alleles that it cannot affect by direct retention. Binds transporters associated with antigen processing (TAP) and acts as a tapasin inhibitor, preventing class I/TAP association. In consequence, infected cells are masked for immune recognition by cytotoxic T-lymphocytes. This is Early E3 18.5 kDa glycoprotein from Human adenovirus B serotype 11 (strain Slobiski) (HAdV-11).